The chain runs to 230 residues: Orotidine 5'-phosphate decarboxylase (230 aa).

Residues D11, K34, 61 to 70 (DLKLHDIPNT), T117, R179, Q188, G208, and R209 contribute to the substrate site. K63 (proton donor) is an active-site residue.

The protein belongs to the OMP decarboxylase family. Type 1 subfamily. As to quaternary structure, homodimer.

It catalyses the reaction orotidine 5'-phosphate + H(+) = UMP + CO2. Its pathway is pyrimidine metabolism; UMP biosynthesis via de novo pathway; UMP from orotate: step 2/2. Functionally, catalyzes the decarboxylation of orotidine 5'-monophosphate (OMP) to uridine 5'-monophosphate (UMP). This Streptococcus pyogenes serotype M49 (strain NZ131) protein is Orotidine 5'-phosphate decarboxylase.